A 384-amino-acid polypeptide reads, in one-letter code: Lipid-A-disaccharide synthase (384 aa).

This sequence belongs to the LpxB family.

The catalysed reaction is a lipid X + a UDP-2-N,3-O-bis[(3R)-3-hydroxyacyl]-alpha-D-glucosamine = a lipid A disaccharide + UDP + H(+). The protein operates within bacterial outer membrane biogenesis; LPS lipid A biosynthesis. In terms of biological role, condensation of UDP-2,3-diacylglucosamine and 2,3-diacylglucosamine-1-phosphate to form lipid A disaccharide, a precursor of lipid A, a phosphorylated glycolipid that anchors the lipopolysaccharide to the outer membrane of the cell. This is Lipid-A-disaccharide synthase from Cellvibrio japonicus (strain Ueda107) (Pseudomonas fluorescens subsp. cellulosa).